The following is a 95-amino-acid chain: RING finger protein Z (95 aa).

The N-myristoyl glycine; by host moiety is linked to residue G2. An RING-type; atypical zinc finger spans residues 38–74 (CKRCWFATKGLIACSDHYLCLNCLTIMLSDGNFCEVC). Residues 88 to 91 (PSAP) carry the PTAP/PSAP motif motif.

It belongs to the arenaviridae Z protein family. In terms of assembly, interacts with protein NP; this interaction probably directs the encapsidated genome to budding sites. Interacts (via RING domain) with polymerase L; this interaction inhibits viral transcription and replication, Z partially blocks the product exit tunnel for the releasing nascent RNA product. Interacts with the glycoprotein complex; this interaction plays a role in virion budding. Interacts with host eIF4E; this interaction results in eIF4E reduced affinity for its substrate, the 5'-m7 G cap structure. Interacts (via late-budding domain) with host TSG101; this interaction is essential for budding and release of viral particles. Interacts with host RPLP0; this interaction may serve to load ribosome-like particles inside the virion. Interacts with host PML; this interaction induces PML bodies redistribution in the cytoplasm upon viral infection. Myristoylation is required for the role of RING finger protein Z in assembly and budding.

It localises to the virion. It is found in the host cytoplasm. The protein resides in the host perinuclear region. The protein localises to the host cell membrane. Its function is as follows. Plays a crucial role in virion assembly and budding. Expressed late in the virus life cycle, it acts as an inhibitor of viral transcription and RNA synthesis by interacting with the viral polymerase L. Presumably recruits the NP encapsidated genome to cellular membranes at budding sites via direct interaction with NP. Plays critical roles in the final steps of viral release by interacting with host TSG101, a member of the vacuolar protein-sorting pathway and using other cellular host proteins involved in vesicle formation pathway. The budding of the virus progeny occurs after association of protein Z with the viral glycoprotein complex SSP-GP1-GP2 at the cell periphery, step that requires myristoylation of protein Z. Also selectively represses protein production by associating with host eIF4E. In cell-based minigenome assay, has an inhibitory effect on the ribonucleoprotein machinery (vRNP), which is responsible for the replication and transcription of the viral genome. In Sooretamys angouya (Paraguayan rice rat), this protein is RING finger protein Z.